A 343-amino-acid chain; its full sequence is MIFIDACFGKPTPYTPIWMMRQAGRYLPEYMAVRDAAGDFLSLCKDYKKASEVTLQPVDILGVDAAIMFSDILVVPLEMGMELKFIKGEGPVFENPILSMDSLDKLSVEKAVKNLSYVYDTIKLTREKLSSDKALIGFCGAPWTIATYMIEGGSTKTYNISKKMLYDNPQFLHAILRKVTNALKLYLEEQIKAGVNAVQIFDSWASALEQNAYLEFGFSYINELVDYIKSQYPDIPVIVFPKGISGFLNKIGGKFDVFGVDWSTPLKMAKETLGSRYVLQGNMEPTRLYSKDAIDDGVDEILSIMRGHRHIFNLGHGILPDVPVENAKYFIKSVQEKSAKYCK.

Residues 21 to 25, Asp-71, Tyr-148, Ser-203, and His-316 each bind substrate; that span reads RQAGR.

Belongs to the uroporphyrinogen decarboxylase family. In terms of assembly, homodimer.

Its subcellular location is the cytoplasm. It carries out the reaction uroporphyrinogen III + 4 H(+) = coproporphyrinogen III + 4 CO2. It participates in porphyrin-containing compound metabolism; protoporphyrin-IX biosynthesis; coproporphyrinogen-III from 5-aminolevulinate: step 4/4. In terms of biological role, catalyzes the decarboxylation of four acetate groups of uroporphyrinogen-III to yield coproporphyrinogen-III. This chain is Uroporphyrinogen decarboxylase, found in Campylobacter fetus subsp. fetus (strain 82-40).